The chain runs to 309 residues: L-aminoadipate-semialdehyde dehydrogenase-phosphopantetheinyl transferase (309 aa).

CoA-binding positions include Arg47, 86–91 (RTSKGK), and 108–111 (NISH). Mg(2+) contacts are provided by Asp129 and Glu181. 181 to 185 (ESFIK) is a binding site for CoA.

Belongs to the P-Pant transferase superfamily. AcpS family. As to quaternary structure, monomer. Mg(2+) serves as cofactor.

It localises to the cytoplasm. The protein resides in the cytosol. It catalyses the reaction apo-[ACP] + CoA = holo-[ACP] + adenosine 3',5'-bisphosphate + H(+). It carries out the reaction apo-[ACP] + acetyl-CoA = acetyl-[ACP] + adenosine 3',5'-bisphosphate + H(+). In terms of biological role, catalyzes the post-translational modification of target proteins by phosphopantetheine. Can transfer the 4'-phosphopantetheine moiety from coenzyme A, regardless of whether the CoA is presented in the free thiol form or as an acetyl thioester, to a serine residue of a broad range of acceptors including the acyl carrier domain of FASN. In Rattus norvegicus (Rat), this protein is L-aminoadipate-semialdehyde dehydrogenase-phosphopantetheinyl transferase (Aasdhppt).